Consider the following 258-residue polypeptide: uncharacterized protein (258 aa).

Positions 1-20 are cleaved as a signal peptide; the sequence is MKCFQKLYIFILILIVLMAG. A lipid anchor (N-palmitoyl cysteine) is attached at Cys21. Cys21 is lipidated: S-diacylglycerol cysteine.

The protein belongs to the staphylococcal tandem lipoprotein family.

It localises to the cell membrane. This is an uncharacterized protein from Staphylococcus aureus (strain bovine RF122 / ET3-1).